We begin with the raw amino-acid sequence, 329 residues long: 4-hydroxythreonine-4-phosphate dehydrogenase (329 aa).

Positions 136 and 137 each coordinate substrate. 3 residues coordinate a divalent metal cation: histidine 166, histidine 211, and histidine 266. Residues lysine 274, asparagine 283, and arginine 292 each coordinate substrate.

Belongs to the PdxA family. As to quaternary structure, homodimer. The cofactor is Zn(2+). Requires Mg(2+) as cofactor. Co(2+) is required as a cofactor.

It is found in the cytoplasm. The enzyme catalyses 4-(phosphooxy)-L-threonine + NAD(+) = 3-amino-2-oxopropyl phosphate + CO2 + NADH. It functions in the pathway cofactor biosynthesis; pyridoxine 5'-phosphate biosynthesis; pyridoxine 5'-phosphate from D-erythrose 4-phosphate: step 4/5. Catalyzes the NAD(P)-dependent oxidation of 4-(phosphooxy)-L-threonine (HTP) into 2-amino-3-oxo-4-(phosphooxy)butyric acid which spontaneously decarboxylates to form 3-amino-2-oxopropyl phosphate (AHAP). The sequence is that of 4-hydroxythreonine-4-phosphate dehydrogenase from Escherichia coli O139:H28 (strain E24377A / ETEC).